The following is a 1052-amino-acid chain: Focal adhesion kinase 1 (1052 aa).

The interval 1-27 (MAAAYLDPNLNHTPSSSTKTHLGTGME) is disordered. An N-acetylalanine modification is found at A2. Y5 carries the post-translational modification Phosphotyrosine. A compositionally biased stretch (polar residues) spans 10 to 21 (LNHTPSSSTKTH). T13 is subject to Phosphothreonine. Phosphoserine occurs at positions 29 and 54. The FERM domain maps to 35 to 355 (RVLKVFHYFE…GYCRLVNGAT (321 aa)). K152 is covalently cross-linked (Glycyl lysine isopeptide (Lys-Gly) (interchain with G-Cter in SUMO)). Y397 and Y407 each carry phosphotyrosine. Y397 carries the post-translational modification Phosphotyrosine; by autocatalysis. Residues 428 to 434 (IGEGQFG), K454, and 500 to 502 (ELC) each bind ATP. In terms of domain architecture, Protein kinase spans 431–680 (GQFGDVHQGV…ELKAQLSTIL (250 aa)). D546 (proton acceptor) is an active-site residue. Position 570 is a phosphotyrosine (Y570). Y576 and Y577 each carry phosphotyrosine; by RET and SRC. A Phosphoserine modification is found at S580. Positions 685–697 (VQQEERMRMESRR) are enriched in basic and acidic residues. 2 disordered regions span residues 685 to 734 (VQQE…PSPQ) and 837 to 921 (VRLS…DRSN). Positions 707 to 1052 (GSDEAPPKPS…LKMLGQTRPH (346 aa)) are interaction with TGFB1I1. A Phosphoserine modification is found at S722. At S732 the chain carries Phosphoserine; by CDK5. The segment covering 837–849 (VRLSRGSIDREDG) has biased composition (basic and acidic residues). At S843 the chain carries Phosphoserine. Position 861 is a phosphotyrosine (Y861). Residues 869–880 (PAAPPKKPPRPG) are compositionally biased toward pro residues. Over residues 886-896 (SNLSSISSPAD) the composition is skewed to polar residues. S910 carries the post-translational modification Phosphoserine. The tract at residues 912-1052 (PPTANLDRSN…LKMLGQTRPH (141 aa)) is interaction with ARHGEF28. T914 bears the Phosphothreonine mark. A Phosphotyrosine; by SRC modification is found at Y925.

It belongs to the protein kinase superfamily. Tyr protein kinase family. FAK subfamily. As to quaternary structure, interacts with GIT1. Component of a complex that contains at least FER, CTTN and PTK2/FAK1. Interacts with BMX. Interacts with STEAP4. Interacts with ZFYVE21. Interacts with ESR1. Interacts with FGR, FLT4 and RET. Interacts with EPHA2 in resting cells; activation of EPHA2 recruits PTPN11, leading to dephosphorylation of PTK2/FAK1 and dissociation of the complex. Interacts with EPHA1 (kinase activity-dependent). Interacts with MISP. Interacts with PIAS1. Interacts with ARHGAP26 and SHC1. Interacts with RB1CC1; this inhibits PTK2/FAK1 activity and activation of downstream signaling pathways. Interacts with P53/TP53. Interacts with STAT1. Interacts with WASL. Interacts with ARHGEF7. Interacts with DCC. Interacts (via first Pro-rich region) with CAS family members (via SH3 domain), including BCAR1, BCAR3 and CASS4. Interacts with NEDD9 (via C-terminus). Interacts with SORBS1. Interacts with ARHGEF28. Interacts with SHB. Part of a complex composed of THSD1, PTK2/FAK1, TLN1 and VCL. Interacts with PXN and TLN1. Interacts with TGFB1I1. Interacts with PIK3R1 or PIK3R2. Interacts with SRC, GRB2 and GRB7. Interacts with LPXN (via LD motif 3). Interacts with CD36. Interacts with EMP2; regulates PTK2 activation and localization. Interacts with DSCAM. Interacts with AMBRA1. Interacts (when tyrosine-phosphorylated) with tensin TNS1; the interaction is increased by phosphorylation of TNS1. In terms of processing, phosphorylated on tyrosine residues upon activation, e.g. upon integrin signaling. Tyr-397 is the major autophosphorylation site, but other kinases can also phosphorylate this residue. Phosphorylation at Tyr-397 promotes interaction with SRC and SRC family members, leading to phosphorylation at Tyr-576, Tyr-577 and at additional tyrosine residues. FGR promotes phosphorylation at Tyr-397 and Tyr-576. FER promotes phosphorylation at Tyr-577, Tyr-861 and Tyr-925, even when cells are not adherent. Tyr-397, Tyr-576 and Ser-722 are phosphorylated only when cells are adherent. Phosphorylation at Tyr-397 is important for interaction with BMX, PIK3R1 and SHC1. Phosphorylation at Tyr-925 is important for interaction with GRB2. Dephosphorylated by PTPN11; PTPN11 is recruited to PTK2 via EPHA2 (tyrosine phosphorylated). Microtubule-induced dephosphorylation at Tyr-397 is crucial for the induction of focal adhesion disassembly; this dephosphorylation could be catalyzed by PTPN11 and regulated by ZFYVE21. Phosphorylation on tyrosine residues is enhanced by NTN1. Post-translationally, sumoylated; this enhances autophosphorylation.

The protein localises to the cell junction. It localises to the focal adhesion. Its subcellular location is the cell membrane. The protein resides in the cytoplasm. It is found in the perinuclear region. The protein localises to the cell cortex. It localises to the cytoskeleton. Its subcellular location is the microtubule organizing center. The protein resides in the centrosome. It is found in the nucleus. The protein localises to the cilium basal body. It carries out the reaction L-tyrosyl-[protein] + ATP = O-phospho-L-tyrosyl-[protein] + ADP + H(+). With respect to regulation, subject to autoinhibition, mediated by interactions between the FERM domain and the kinase domain. Activated by autophosphorylation at Tyr-397. This promotes interaction with SRC and phosphorylation at Tyr-576 and Tyr-577 in the kinase activation loop by SRC. Phosphorylation at Tyr-397, Tyr-576 and Tyr-577 is required for maximal kinase activity. In terms of biological role, non-receptor protein-tyrosine kinase that plays an essential role in regulating cell migration, adhesion, spreading, reorganization of the actin cytoskeleton, formation and disassembly of focal adhesions and cell protrusions, cell cycle progression, cell proliferation and apoptosis. Required for early embryonic development and placenta development. Required for embryonic angiogenesis, normal cardiomyocyte migration and proliferation, and normal heart development. Regulates axon growth and neuronal cell migration, axon branching and synapse formation; required for normal development of the nervous system. Plays a role in osteogenesis and differentiation of osteoblasts. Functions in integrin signal transduction, but also in signaling downstream of numerous growth factor receptors, G-protein coupled receptors (GPCR), EPHA2, netrin receptors and LDL receptors. Forms multisubunit signaling complexes with SRC and SRC family members upon activation; this leads to the phosphorylation of additional tyrosine residues, creating binding sites for scaffold proteins, effectors and substrates. Regulates numerous signaling pathways. Promotes activation of phosphatidylinositol 3-kinase and the AKT1 signaling cascade. Promotes activation of MAPK1/ERK2, MAPK3/ERK1 and the MAP kinase signaling cascade. Promotes localized and transient activation of guanine nucleotide exchange factors (GEFs) and GTPase-activating proteins (GAPs), and thereby modulates the activity of Rho family GTPases. Signaling via CAS family members mediates activation of RAC1. Phosphorylates NEDD9 following integrin stimulation. Recruits the ubiquitin ligase MDM2 to P53/TP53 in the nucleus, and thereby regulates P53/TP53 activity, P53/TP53 ubiquitination and proteasomal degradation. Phosphorylates SRC; this increases SRC kinase activity. Phosphorylates ACTN1, ARHGEF7, GRB7, RET and WASL. Promotes phosphorylation of PXN and STAT1; most likely PXN and STAT1 are phosphorylated by a SRC family kinase that is recruited to autophosphorylated PTK2/FAK1, rather than by PTK2/FAK1 itself. Promotes phosphorylation of BCAR1; GIT2 and SHC1; this requires both SRC and PTK2/FAK1. Promotes phosphorylation of BMX and PIK3R1. Its function is as follows. Does not contain a kinase domain and inhibits PTK2/FAK1 phosphorylation and signaling. Its enhanced expression can attenuate the nuclear accumulation of LPXN and limit its ability to enhance serum response factor (SRF)-dependent gene transcription. The chain is Focal adhesion kinase 1 from Mus musculus (Mouse).